A 277-amino-acid chain; its full sequence is 4-hydroxy-tetrahydrodipicolinate reductase (277 aa).

9–14 (GATGRM) provides a ligand contact to NAD(+). Lysine 37 is an NADP(+) binding site. 75–77 (GTS) provides a ligand contact to NAD(+). Histidine 132 (proton donor/acceptor) is an active-site residue. The Proton donor role is filled by lysine 136. 142 to 143 (GT) contacts (S)-2,3,4,5-tetrahydrodipicolinate. Disordered regions lie at residues 154-173 (ARGARGPVQAPHTDQRARGQ) and 247-277 (ERAAQAAAGDAPSGPVDDGGPSGQAATVTSA). A compositionally biased stretch (low complexity) spans 250 to 265 (AQAAAGDAPSGPVDDG).

The protein belongs to the DapB family.

Its subcellular location is the cytoplasm. The enzyme catalyses (S)-2,3,4,5-tetrahydrodipicolinate + NAD(+) + H2O = (2S,4S)-4-hydroxy-2,3,4,5-tetrahydrodipicolinate + NADH + H(+). It carries out the reaction (S)-2,3,4,5-tetrahydrodipicolinate + NADP(+) + H2O = (2S,4S)-4-hydroxy-2,3,4,5-tetrahydrodipicolinate + NADPH + H(+). The protein operates within amino-acid biosynthesis; L-lysine biosynthesis via DAP pathway; (S)-tetrahydrodipicolinate from L-aspartate: step 4/4. Catalyzes the conversion of 4-hydroxy-tetrahydrodipicolinate (HTPA) to tetrahydrodipicolinate. This Clavibacter michiganensis subsp. michiganensis (strain NCPPB 382) protein is 4-hydroxy-tetrahydrodipicolinate reductase.